Consider the following 378-residue polypeptide: Transcription initiation factor IIA subunit 1 (378 aa).

Residue A2 is modified to N-acetylalanine. Composition is skewed to low complexity over residues 69-79 (QVQQQHQPQQQ), 89-106 (QQAQ…TQQV), and 247-281 (PAQA…TGDT). Disordered regions lie at residues 69-108 (QVQQ…QVLI) and 247-331 (PAQA…QELF). Residues S282, S283, S318, and S323 each carry the phosphoserine; by TAF1 modification. Residues 282–331 (SSEEDEDEEEDYDDDEEEDKEKDGAEDGQVEEEPLNSEDDVSDEEGQELF) show a composition bias toward acidic residues. DNA contacts are provided by H345 and R346.

Belongs to the TFIIA subunit 1 family. TFIIA is a heterodimer of the large unprocessed subunit 1 and a small subunit gamma. It was originally believed to be a heterotrimer of an alpha (p35), a beta (p19) and a gamma subunit (p12). TFIIA forms a complex with TBP. Part of TBP-based Pol II pre-initiation complex (PIC), in which Pol II core assembles with general transcription factors and other specific initiation factors including GTF2E1, GTF2E2, GTF2F1, GTF2F2, TCEA1, ERCC2, ERCC3, GTF2H2, GTF2H3, GTF2H4, GTF2H5, GTF2A1, GTF2A2, GTF2B and TBP; this large multi-subunit PIC complex mediates DNA unwinding and targets Pol II core to the transcription start site where the first phosphodiester bond forms. The alpha and beta subunits are postranslationally produced from the precursor form by TASP1. The cleavage promotes proteasomal degradation. As to expression, expressed in pachytene spermatocytes and spermatids.

The protein resides in the nucleus. TFIIA is a component of the transcription machinery of RNA polymerase II and plays an important role in transcriptional activation. TFIIA in a complex with TBP mediates transcriptional activity. The chain is Transcription initiation factor IIA subunit 1 (Gtf2a1) from Mus musculus (Mouse).